A 337-amino-acid polypeptide reads, in one-letter code: DNA-directed RNA polymerase subunit alpha (337 aa).

Positions 1–231 are alpha N-terminal domain (alpha-NTD); that stretch reads MRNITISAYT…KQLSVFDKIT (231 aa). An alpha C-terminal domain (alpha-CTD) region spans residues 248–337; it reads NTKLLQNITD…IAELKAQNEG (90 aa).

It belongs to the RNA polymerase alpha chain family. In terms of assembly, homodimer. The RNAP catalytic core consists of 2 alpha, 1 beta, 1 beta' and 1 omega subunit. When a sigma factor is associated with the core the holoenzyme is formed, which can initiate transcription.

It catalyses the reaction RNA(n) + a ribonucleoside 5'-triphosphate = RNA(n+1) + diphosphate. Its function is as follows. DNA-dependent RNA polymerase catalyzes the transcription of DNA into RNA using the four ribonucleoside triphosphates as substrates. The sequence is that of DNA-directed RNA polymerase subunit alpha from Campylobacter jejuni subsp. doylei (strain ATCC BAA-1458 / RM4099 / 269.97).